Consider the following 165-residue polypeptide: Regulator of ribonuclease activity A (165 aa).

This sequence belongs to the RraA family. Homotrimer. Binds to both RNA-binding sites in the C-terminal region of Rne and to RhlB.

The protein resides in the cytoplasm. Its function is as follows. Globally modulates RNA abundance by binding to RNase E (Rne) and regulating its endonucleolytic activity. Can modulate Rne action in a substrate-dependent manner by altering the composition of the degradosome. Modulates RNA-binding and helicase activities of the degradosome. The protein is Regulator of ribonuclease activity A of Haemophilus ducreyi (strain 35000HP / ATCC 700724).